A 377-amino-acid chain; its full sequence is 4-hydroxy-3-methylbut-2-en-1-yl diphosphate synthase (flavodoxin) (377 aa).

[4Fe-4S] cluster contacts are provided by C270, C273, C305, and E312.

The protein belongs to the IspG family. Requires [4Fe-4S] cluster as cofactor.

It catalyses the reaction (2E)-4-hydroxy-3-methylbut-2-enyl diphosphate + oxidized [flavodoxin] + H2O + 2 H(+) = 2-C-methyl-D-erythritol 2,4-cyclic diphosphate + reduced [flavodoxin]. Its pathway is isoprenoid biosynthesis; isopentenyl diphosphate biosynthesis via DXP pathway; isopentenyl diphosphate from 1-deoxy-D-xylulose 5-phosphate: step 5/6. Converts 2C-methyl-D-erythritol 2,4-cyclodiphosphate (ME-2,4cPP) into 1-hydroxy-2-methyl-2-(E)-butenyl 4-diphosphate. In Bacillus subtilis (strain 168), this protein is 4-hydroxy-3-methylbut-2-en-1-yl diphosphate synthase (flavodoxin).